The sequence spans 129 residues: Phosphoribosyl-AMP cyclohydrolase (129 aa).

D77 is a Mg(2+) binding site. Residue C78 coordinates Zn(2+). Residues D79 and D81 each coordinate Mg(2+). C94 and C101 together coordinate Zn(2+).

The protein belongs to the PRA-CH family. As to quaternary structure, homodimer. Mg(2+) serves as cofactor. It depends on Zn(2+) as a cofactor.

It localises to the cytoplasm. The enzyme catalyses 1-(5-phospho-beta-D-ribosyl)-5'-AMP + H2O = 1-(5-phospho-beta-D-ribosyl)-5-[(5-phospho-beta-D-ribosylamino)methylideneamino]imidazole-4-carboxamide. It participates in amino-acid biosynthesis; L-histidine biosynthesis; L-histidine from 5-phospho-alpha-D-ribose 1-diphosphate: step 3/9. In terms of biological role, catalyzes the hydrolysis of the adenine ring of phosphoribosyl-AMP. The protein is Phosphoribosyl-AMP cyclohydrolase of Methanosphaera stadtmanae (strain ATCC 43021 / DSM 3091 / JCM 11832 / MCB-3).